The chain runs to 375 residues: Dual-specificity RNA methyltransferase RlmN (375 aa).

Glu-98 acts as the Proton acceptor in catalysis. One can recognise a Radical SAM core domain in the interval 106–346 (GGKRRTLCVS…VRTTRGDDID (241 aa)). Cysteines 113 and 349 form a disulfide. Cys-120, Cys-124, and Cys-127 together coordinate [4Fe-4S] cluster. Residues 174 to 175 (GE), Ser-206, 228 to 230 (SLH), and Asn-306 contribute to the S-adenosyl-L-methionine site. Cys-349 acts as the S-methylcysteine intermediate in catalysis.

Belongs to the radical SAM superfamily. RlmN family. [4Fe-4S] cluster serves as cofactor.

It is found in the cytoplasm. It catalyses the reaction adenosine(2503) in 23S rRNA + 2 reduced [2Fe-2S]-[ferredoxin] + 2 S-adenosyl-L-methionine = 2-methyladenosine(2503) in 23S rRNA + 5'-deoxyadenosine + L-methionine + 2 oxidized [2Fe-2S]-[ferredoxin] + S-adenosyl-L-homocysteine. The catalysed reaction is adenosine(37) in tRNA + 2 reduced [2Fe-2S]-[ferredoxin] + 2 S-adenosyl-L-methionine = 2-methyladenosine(37) in tRNA + 5'-deoxyadenosine + L-methionine + 2 oxidized [2Fe-2S]-[ferredoxin] + S-adenosyl-L-homocysteine. Specifically methylates position 2 of adenine 2503 in 23S rRNA and position 2 of adenine 37 in tRNAs. m2A2503 modification seems to play a crucial role in the proofreading step occurring at the peptidyl transferase center and thus would serve to optimize ribosomal fidelity. The protein is Dual-specificity RNA methyltransferase RlmN of Chromohalobacter salexigens (strain ATCC BAA-138 / DSM 3043 / CIP 106854 / NCIMB 13768 / 1H11).